We begin with the raw amino-acid sequence, 162 residues long: Putative ureidoglycolate lyase (162 aa).

This sequence belongs to the ureidoglycolate lyase family. In terms of assembly, homodimer. The cofactor is Ni(2+).

The enzyme catalyses (S)-ureidoglycolate = urea + glyoxylate. It participates in nitrogen metabolism; (S)-allantoin degradation. Functionally, catalyzes the catabolism of the allantoin degradation intermediate (S)-ureidoglycolate, generating urea and glyoxylate. Involved in the utilization of allantoin as nitrogen source. This chain is Putative ureidoglycolate lyase, found in Agrobacterium fabrum (strain C58 / ATCC 33970) (Agrobacterium tumefaciens (strain C58)).